The sequence spans 713 residues: Phenylalanine--tRNA ligase beta subunit (713 aa).

Positions 39–153 (IRHVENIKYG…EANLNEDPIA (115 aa)) constitute a tRNA-binding domain. The B5 domain maps to 379-454 (LKPKEILFDH…RFYGYDNFPI (76 aa)). Mg(2+) contacts are provided by Asp432, Asp438, Glu441, and Glu442.

Belongs to the phenylalanyl-tRNA synthetase beta subunit family. Type 1 subfamily. As to quaternary structure, tetramer of two alpha and two beta subunits. Mg(2+) is required as a cofactor.

It is found in the cytoplasm. It carries out the reaction tRNA(Phe) + L-phenylalanine + ATP = L-phenylalanyl-tRNA(Phe) + AMP + diphosphate + H(+). The protein is Phenylalanine--tRNA ligase beta subunit of Mycoplasma mobile (strain ATCC 43663 / 163K / NCTC 11711) (Mesomycoplasma mobile).